The following is a 121-amino-acid chain: Large ribosomal subunit protein bL12 (121 aa).

Belongs to the bacterial ribosomal protein bL12 family. As to quaternary structure, homodimer. Part of the ribosomal stalk of the 50S ribosomal subunit. Forms a multimeric L10(L12)X complex, where L10 forms an elongated spine to which 2 to 4 L12 dimers bind in a sequential fashion. Binds GTP-bound translation factors.

Its function is as follows. Forms part of the ribosomal stalk which helps the ribosome interact with GTP-bound translation factors. Is thus essential for accurate translation. The polypeptide is Large ribosomal subunit protein bL12 (Xanthomonas axonopodis pv. citri (strain 306)).